We begin with the raw amino-acid sequence, 445 residues long: Phospho-alpha-glucosidase PagL (445 aa).

4-71 (YSICIVGGGS…ELEEVIWTTD (68 aa)) lines the NAD(+) pocket. Positions 94 and 148 each coordinate substrate. Cysteine 171 provides a ligand contact to Mn(2+). Aspartate 172 (proton donor) is an active-site residue. Histidine 201 lines the Mn(2+) pocket. Tyrosine 264 serves as the catalytic Proton acceptor. A substrate-binding site is contributed by arginine 284.

Belongs to the glycosyl hydrolase 4 family. Homotetramer. Requires NAD(+) as cofactor. Mn(2+) serves as cofactor.

Functionally, phospho-alpha-glucosidase that catalyzes the hydrolysis of p-nitrophenyl-alpha-D-glucopyranoside 6-phosphate, but is not able to cleave 'natural' phospho-alpha-glucosides produced via the phosphoenolpyruvate-dependent sugar phosphotransferase system (PEP-PTS). The sequence is that of Phospho-alpha-glucosidase PagL (pagL) from Clostridium acetobutylicum (strain ATCC 824 / DSM 792 / JCM 1419 / IAM 19013 / LMG 5710 / NBRC 13948 / NRRL B-527 / VKM B-1787 / 2291 / W).